The sequence spans 505 residues: Histidine ammonia-lyase (505 aa).

The segment at residues 141–143 (ASG) is a cross-link (5-imidazolinone (Ala-Gly)). At S142 the chain carries 2,3-didehydroalanine (Ser).

It belongs to the PAL/histidase family. In terms of processing, contains an active site 4-methylidene-imidazol-5-one (MIO), which is formed autocatalytically by cyclization and dehydration of residues Ala-Ser-Gly.

Its subcellular location is the cytoplasm. The catalysed reaction is L-histidine = trans-urocanate + NH4(+). The protein operates within amino-acid degradation; L-histidine degradation into L-glutamate; N-formimidoyl-L-glutamate from L-histidine: step 1/3. This is Histidine ammonia-lyase from Bacillus cereus (strain 03BB102).